A 460-amino-acid chain; its full sequence is Bifunctional protein GlmU (460 aa).

The tract at residues Met1–Arg235 is pyrophosphorylase. UDP-N-acetyl-alpha-D-glucosamine contacts are provided by residues Leu9 to Gly12, Lys23, Gln76, and Gly81 to Thr82. Residue Asp109 participates in Mg(2+) binding. Positions 146, 161, 176, and 233 each coordinate UDP-N-acetyl-alpha-D-glucosamine. Mg(2+) is bound at residue Asn233. The segment at Val236–Glu256 is linker. The segment at Gly257 to Arg460 is N-acetyltransferase. UDP-N-acetyl-alpha-D-glucosamine-binding residues include Arg338 and Lys356. Catalysis depends on His368, which acts as the Proton acceptor. Tyr371 and Asn382 together coordinate UDP-N-acetyl-alpha-D-glucosamine. Acetyl-CoA-binding positions include Asn391–Tyr392 and Ala428.

The protein in the N-terminal section; belongs to the N-acetylglucosamine-1-phosphate uridyltransferase family. This sequence in the C-terminal section; belongs to the transferase hexapeptide repeat family. Homotrimer. Mg(2+) serves as cofactor.

The protein resides in the cytoplasm. It carries out the reaction alpha-D-glucosamine 1-phosphate + acetyl-CoA = N-acetyl-alpha-D-glucosamine 1-phosphate + CoA + H(+). It catalyses the reaction N-acetyl-alpha-D-glucosamine 1-phosphate + UTP + H(+) = UDP-N-acetyl-alpha-D-glucosamine + diphosphate. Its pathway is nucleotide-sugar biosynthesis; UDP-N-acetyl-alpha-D-glucosamine biosynthesis; N-acetyl-alpha-D-glucosamine 1-phosphate from alpha-D-glucosamine 6-phosphate (route II): step 2/2. The protein operates within nucleotide-sugar biosynthesis; UDP-N-acetyl-alpha-D-glucosamine biosynthesis; UDP-N-acetyl-alpha-D-glucosamine from N-acetyl-alpha-D-glucosamine 1-phosphate: step 1/1. It functions in the pathway bacterial outer membrane biogenesis; LPS lipid A biosynthesis. Its function is as follows. Catalyzes the last two sequential reactions in the de novo biosynthetic pathway for UDP-N-acetylglucosamine (UDP-GlcNAc). The C-terminal domain catalyzes the transfer of acetyl group from acetyl coenzyme A to glucosamine-1-phosphate (GlcN-1-P) to produce N-acetylglucosamine-1-phosphate (GlcNAc-1-P), which is converted into UDP-GlcNAc by the transfer of uridine 5-monophosphate (from uridine 5-triphosphate), a reaction catalyzed by the N-terminal domain. This Bifidobacterium adolescentis (strain ATCC 15703 / DSM 20083 / NCTC 11814 / E194a) protein is Bifunctional protein GlmU.